We begin with the raw amino-acid sequence, 273 residues long: Gamma-glutamyl cyclotransferase gliK (273 aa).

Residues 227–243 traverse the membrane as a helical segment; that stretch reads WLGWIILTLYGLMWSYH.

It belongs to the class-I pyridoxal-phosphate-dependent aminotransferase family.

Its subcellular location is the membrane. It catalyses the reaction an alpha-(gamma-L-glutamyl)-L-amino acid = 5-oxo-L-proline + an L-alpha-amino acid. Its pathway is mycotoxin biosynthesis. Gamma-glutamyl cyclotransferase-like protein; part of the gene cluster that mediates the biosynthesis of gliotoxin, a member of the epipolythiodioxopiperazine (ETP) class of toxins characterized by a disulfide bridged cyclic dipeptide. The first step in gliotoxin biosynthesis is the condensation of serine and phenylalanine to form the cyclo-L-phenylalanyl-L-serine diketopiperazine (DKP) by the NRPS gliP. GliP is also able to produce the DKP cyclo-L-tryptophanyl-L-serine, suggesting that the substrate specificity of the first adenylation (A) domain in gliP is sufficiently relaxed to accommodate both L-Phe and L-Trp. The cytochrome P450 monooxygenase gliC has been shown to catalyze the subsequent hydroxylation of the alpha-carbon of L-Phe in cyclo-L-phenylalanyl-L-serine whereas the second cytochrome P450 enzyme, gliF, is presumably involved in the modification of the DKP side chain. The glutathione S-transferase (GST) gliG then forms a bis-glutathionylated biosynthetic intermediate which is responsible for the sulfurization of gliotoxin. This bis-glutathionylated intermediate is subsequently processed by the gamma-glutamyl cyclotransferase gliK to remove both gamma-glutamyl moieties. Subsequent processing via gliI yields a biosynthetic intermediate, which is N-methylated via the N-methyltransferase gliN, before the gliotoxin oxidoreductase gliT-mediated disulfide bridge closure. GliN-mediated amide methylation confers stability to ETP, damping the spontaneous formation of tri- and tetrasulfides. Intracellular dithiol gliotoxin oxidized by gliT is subsequently effluxed by gliA. Gliotoxin contributes to pathogenesis during invasive aspergillosis. In macrophages and neutrophils, gliotoxin showed inhibition of various different cell functions including cytokine production, antigen presentation, phagocytosis, and production of reactive oxygen species. This chain is Gamma-glutamyl cyclotransferase gliK, found in Aspergillus fumigatus (strain ATCC MYA-4609 / CBS 101355 / FGSC A1100 / Af293) (Neosartorya fumigata).